The chain runs to 722 residues: Solute carrier organic anion transporter family member 4C1 (722 aa).

A disordered region spans residues 1–81 (MQGSKGIENP…PGSQLSELEE (81 aa)). At 1–101 (MQGSKGIENP…QCLQRCNTPQ (101 aa)) the chain is on the cytoplasmic side. A phosphoserine mark is found at Ser15 and Ser16. At Thr19 the chain carries Phosphothreonine. Phosphoserine occurs at positions 24, 26, and 28. Over residues 25 to 46 (ASPSQVEVSAVASRNQNGGSQP) the composition is skewed to polar residues. A helical membrane pass occupies residues 102 to 122 (GFLLHYCLLALTQGIVVNGLV). At 123–141 (NISISTIEKRYEMKSSLTG) the chain is on the extracellular side. Residues 142-162 (LISSSYDISFCVLSLFVSFFG) traverse the membrane as a helical segment. Residues 163–168 (ERGHKP) lie on the Cytoplasmic side of the membrane. The helical transmembrane segment at 169–193 (RWLAFASFMIGLGALVFSLPHFFSG) threads the bilayer. The Extracellular segment spans residues 194–218 (RYELGSIFEDTCLTRNSTRCSSSTS). A helical membrane pass occupies residues 219 to 249 (LLSNYFYVFVLGQLLLGTGGTPLYTLGTAFI). Over 250–269 (DDSVPTHKSSLYIGIGYSMS) the chain is Cytoplasmic. Residues 270–290 (ILGPAIGYVLGGQLLTMYIDI) form a helical membrane-spanning segment. Over 291 to 306 (AMGQSSDLTEDDPRWL) the chain is Extracellular. A helical membrane pass occupies residues 307–331 (GAWWIGFLLAWLFAWSLIMPFSCFP). Residues 332–376 (KHLPGTAKIQAGKTSQTHQNNSTSFQHTDENFGKSIKDFPTAVKN) lie on the Cytoplasmic side of the membrane. The chain crosses the membrane as a helical span at residues 377–398 (LMRNTVFICLVLSTTSEALITT). Over 399–418 (GFATFLPKFIENQFGLTSSF) the chain is Extracellular. The chain crosses the membrane as a helical span at residues 419–442 (AATLGGAVLIPGAALGQILGGVLV). The Cytoplasmic segment spans residues 443–446 (SKFK). The chain crosses the membrane as a helical span at residues 447-470 (MKCKNTMKFALCTSGVALVLSFVF). The Extracellular portion of the chain corresponds to 471–578 (IYAKCENEPF…RTRCSNLPIF (108 aa)). The 56-residue stretch at 494 to 549 (GNLTAPCNANCNCLRSYYYPLCGSDGIQYFSPCFAGCLNSVSNRKPKVYYNCSCIE) folds into the Kazal-like domain. 3 cysteine pairs are disulfide-bonded: Cys500–Cys530, Cys506–Cys526, and Cys515–Cys547. A helical membrane pass occupies residues 579-601 (LGIFFITVIFTFMAGTPITVSIL). Residues 602-610 (RCVNHRHRS) are Cytoplasmic-facing. A helical transmembrane segment spans residues 611-636 (LALGVQFMLLRLLGTIPGPIIFGVII). The Extracellular portion of the chain corresponds to 637 to 670 (DSTCVLWDVNECGIKGACWIYDNIKMAHMLVAIS). A helical membrane pass occupies residues 671 to 688 (VTCKVITIFFNGLAIVLY). Residues 689-722 (KPPPPGTEVSFQSQNVIVSTISVEEDLDKAENEG) lie on the Cytoplasmic side of the membrane.

This sequence belongs to the organo anion transporter (TC 2.A.60) family. In terms of tissue distribution, strongly expressed in initial segment of epididymis and seminal vesicles.

Its subcellular location is the basolateral cell membrane. The catalysed reaction is estrone 3-sulfate(out) = estrone 3-sulfate(in). It catalyses the reaction L-thyroxine(out) = L-thyroxine(in). It carries out the reaction 3,3',5-triiodo-L-thyronine(out) = 3,3',5-triiodo-L-thyronine(in). The enzyme catalyses chenodeoxycholate(out) = chenodeoxycholate(in). The catalysed reaction is glycocholate(out) = glycocholate(in). It catalyses the reaction L-homoarginine(in) = L-homoarginine(out). It carries out the reaction L-arginine(in) = L-arginine(out). The enzyme catalyses N(omega),N(omega)-dimethyl-L-arginine(out) = N(omega),N(omega)-dimethyl-L-arginine(in). In terms of biological role, mediates the transport of organic anions such as steroids (estrone 3-sulfate, chenodeoxycholate, glycocholate) and thyroid hormones (3,3',5-triiodo-L-thyronine (T3), L-thyroxine (T4)), in the kidney. Capable of transporting cAMP and pharmacological substances such as digoxin, ouabain and methotrexate. Transport is independent of sodium, chloride ion, and ATP. Transport activity is stimulated by an acidic extracellular environment due to increased substrate affinity to the transporter. The driving force for this transport activity is currently not known. The role of hydrogencarbonate (HCO3(-), bicarbonate) as the probable counteranion that exchanges for organic anions is still not well defined. Functions as an uptake transporter at the apical membrane, suggesting a role in renal reabsorption. Involved in the renal secretion of the uremic toxin ADMA (N(omega),N(omega)-dimethyl-L-arginine or asymmetrical dimethylarginine), which is associated to cardiovascular events and mortality, and the structurally related amino acids L-arginine and L-homoarginine (a cardioprotective biomarker). Can act bidirectionally, suggesting a dual protective role of this transport protein; exporting L-homoarginine after being synthesized in proximal tubule cells, and mediating uptake of ADMA from the blood into proximal tubule cells where it is degraded by the enzyme dimethylarginine dimethylaminohydrolase 1 (DDAH1). May be involved in sperm maturation by enabling directed movement of organic anions and compounds within or between cells. This ion-transporting process is important to maintain the strict epididymal homeostasis necessary for sperm maturation. May have a role in secretory functions since seminal vesicle epithelial cells are assumed to secrete proteins involved in decapacitation by modifying surface proteins to facilitate the acquisition of the ability to fertilize the egg. The polypeptide is Solute carrier organic anion transporter family member 4C1 (Mus musculus (Mouse)).